Consider the following 173-residue polypeptide: Ribosome maturation factor RimM (173 aa).

One can recognise a PRC barrel domain in the interval 96-169 (PDEYYDHQLE…LVEIDPPEGL (74 aa)).

It belongs to the RimM family. In terms of assembly, binds ribosomal protein uS19.

It is found in the cytoplasm. In terms of biological role, an accessory protein needed during the final step in the assembly of 30S ribosomal subunit, possibly for assembly of the head region. Essential for efficient processing of 16S rRNA. May be needed both before and after RbfA during the maturation of 16S rRNA. It has affinity for free ribosomal 30S subunits but not for 70S ribosomes. The protein is Ribosome maturation factor RimM of Mycobacterium sp. (strain JLS).